The following is a 209-amino-acid chain: LexA repressor (209 aa).

A DNA-binding region (H-T-H motif) is located at residues 28-48 (RAEIAKELGFRSANAAEEHLK). Active-site for autocatalytic cleavage activity residues include Ser-126 and Lys-163.

The protein belongs to the peptidase S24 family. Homodimer.

The enzyme catalyses Hydrolysis of Ala-|-Gly bond in repressor LexA.. Its function is as follows. Represses a number of genes involved in the response to DNA damage (SOS response), including recA and lexA. In the presence of single-stranded DNA, RecA interacts with LexA causing an autocatalytic cleavage which disrupts the DNA-binding part of LexA, leading to derepression of the SOS regulon and eventually DNA repair. The protein is LexA repressor of Vibrio cholerae serotype O1 (strain ATCC 39541 / Classical Ogawa 395 / O395).